Reading from the N-terminus, the 604-residue chain is ATP-dependent RNA helicase dbp6 (604 aa).

Positions 1-16 (MSVEVDKSSHSKPKIE) are enriched in basic and acidic residues. Disordered stretches follow at residues 1 to 37 (MSVEVDKSSHSKPKIEKKSKRNKRKWLNDENKTHVTA) and 51 to 70 (FSQAAQQALKQSRKEDNERD). Positions 51 to 60 (FSQAAQQALK) are enriched in low complexity. Positions 149–157 (GFAVQAAVL) match the Q motif motif. Positions 167 to 379 (GPMYSYGGDV…SLKLHNPRLV (213 aa)) constitute a Helicase ATP-binding domain. 180-187 (AATGSGKT) lines the ATP pocket. The DEAD box signature appears at 292–295 (DEAD). The Helicase C-terminal domain maps to 406 to 573 (TLQEYHVSVS…RIKIEFSHIS (168 aa)).

Belongs to the DEAD box helicase family. DDX51/DBP6 subfamily. Associated with pre-ribosomal particles.

The protein resides in the nucleus. It localises to the nucleolus. It carries out the reaction ATP + H2O = ADP + phosphate + H(+). ATP-binding RNA helicase involved in the biogenesis of 60S ribosomal subunits and is required for the normal formation of 25S and 5.8S rRNAs. The polypeptide is ATP-dependent RNA helicase dbp6 (dbp6) (Schizosaccharomyces pombe (strain 972 / ATCC 24843) (Fission yeast)).